Consider the following 437-residue polypeptide: CCA-adding enzyme (437 aa).

ATP-binding residues include Ser-50 and Lys-53. 2 residues coordinate CTP: Ser-50 and Lys-53. Residues Asp-61, Asp-63, and Asp-112 each contribute to the Mg(2+) site. His-135, Lys-155, and Tyr-164 together coordinate ATP. His-135, Lys-155, and Tyr-164 together coordinate CTP.

It belongs to the tRNA nucleotidyltransferase/poly(A) polymerase family. Archaeal CCA-adding enzyme subfamily. In terms of assembly, homodimer. Mg(2+) serves as cofactor.

It catalyses the reaction a tRNA precursor + 2 CTP + ATP = a tRNA with a 3' CCA end + 3 diphosphate. It carries out the reaction a tRNA with a 3' CCA end + 2 CTP + ATP = a tRNA with a 3' CCACCA end + 3 diphosphate. In terms of biological role, catalyzes the addition and repair of the essential 3'-terminal CCA sequence in tRNAs without using a nucleic acid template. Adds these three nucleotides in the order of C, C, and A to the tRNA nucleotide-73, using CTP and ATP as substrates and producing inorganic pyrophosphate. tRNA 3'-terminal CCA addition is required both for tRNA processing and repair. Also involved in tRNA surveillance by mediating tandem CCA addition to generate a CCACCA at the 3' terminus of unstable tRNAs. While stable tRNAs receive only 3'-terminal CCA, unstable tRNAs are marked with CCACCA and rapidly degraded. The chain is CCA-adding enzyme from Thermoplasma volcanium (strain ATCC 51530 / DSM 4299 / JCM 9571 / NBRC 15438 / GSS1).